The chain runs to 219 residues: Translation initiation factor 6 (219 aa).

This sequence belongs to the eIF-6 family.

In terms of biological role, binds to the 50S ribosomal subunit and prevents its association with the 30S ribosomal subunit to form the 70S initiation complex. The protein is Translation initiation factor 6 of Methanosarcina mazei (strain ATCC BAA-159 / DSM 3647 / Goe1 / Go1 / JCM 11833 / OCM 88) (Methanosarcina frisia).